Reading from the N-terminus, the 120-residue chain is Large ribosomal subunit protein bL19c (120 aa).

The protein belongs to the bacterial ribosomal protein bL19 family.

It is found in the plastid. Its subcellular location is the chloroplast. This is Large ribosomal subunit protein bL19c from Thalassiosira pseudonana (Marine diatom).